The following is a 153-amino-acid chain: Cornifin-B (153 aa).

2 disordered regions span residues 1–35 and 49–85; these read MSSH…PCVS and CHPK…HPKA. 14 repeat units span residues 27–34, 35–42, 43–50, 51–58, 59–66, 67–74, 75–82, 83–90, 91–98, 99–106, 107–114, 115–122, 123–130, and 131–138. The interval 27–138 is 14 X 8 AA approximate tandem repeats; sequence PPPPEPCVSQ…CQPIVPEPCP (112 aa).

This sequence belongs to the cornifin (SPRR) family. In terms of tissue distribution, expressed in fetal periderm, hair follicles and in the thickened epidermis of the lip and footpad. Also present in the epithelia of various tissues such as the penis, vagina, forestomach, tongue and esophagus.

It is found in the cytoplasm. Functionally, cross-linked envelope protein of keratinocytes. It is a keratinocyte protein that first appears in the cell cytosol, but ultimately becomes cross-linked to membrane proteins by transglutaminase. All that results in the formation of an insoluble envelope beneath the plasma membrane. In Mus musculus (Mouse), this protein is Cornifin-B (Sprr1b).